The chain runs to 316 residues: Homoserine kinase (316 aa).

Position 96 to 106 (96 to 106) interacts with ATP; it reads PHGRGLGSSGA.

It belongs to the GHMP kinase family. Homoserine kinase subfamily.

It localises to the cytoplasm. It catalyses the reaction L-homoserine + ATP = O-phospho-L-homoserine + ADP + H(+). The protein operates within amino-acid biosynthesis; L-threonine biosynthesis; L-threonine from L-aspartate: step 4/5. Functionally, catalyzes the ATP-dependent phosphorylation of L-homoserine to L-homoserine phosphate. The sequence is that of Homoserine kinase from Clavibacter michiganensis subsp. michiganensis (strain NCPPB 382).